The primary structure comprises 254 residues: MEKKAVIITGGSSGMGKAMAKKQAELGWHVMVTGRNHEALEETKKEIQTFEGQVACFQMDVRSDSAASDMIKEAVKAFGRLDALINNAAGNFICPAEKLTPNGWKAVIEIVLNGTFFCSQAAARHWIDQKQQGVILNMAATYAWGAGAGVVHSAAAKAGVLSLTRTLAVEWGSKYGIRTNAIAPGPIERTGGAEKLFESEKAMARTMNSVPLGRLGTPEEIAALAAFLLSDEASYINGDCITMDGGQWLNPYPF.

6 to 38 (VIITGGSSGMGKAMAKKQAELGWHVMVTGRNHE) provides a ligand contact to NADP(+). T100 contributes to the substrate binding site. Y142 (proton acceptor) is an active-site residue. K157 serves as a coordination point for NAD(+).

Belongs to the short-chain dehydrogenases/reductases (SDR) family. 2,4-dienoyl-CoA reductase subfamily.

The enzyme catalyses a 4,5-saturated-(2E)-enoyl-CoA + NADP(+) = a (2E,4E)-dienoyl-CoA + NADPH + H(+). It catalyses the reaction a (2E,4Z)-dienoyl-CoA + NADPH + H(+) = a 4,5-saturated-(2E)-enoyl-CoA + NADP(+). Its pathway is lipid metabolism; fatty acid beta-oxidation. In terms of biological role, auxiliary enzyme of beta-oxidation. It participates in the metabolism of unsaturated fatty enoyl-CoA esters having double bonds in both even- and odd-numbered positions. Catalyzes the NADP-dependent reduction of 2,4-dienoyl-CoA to yield trans-3-enoyl-CoA. This chain is Probable 2,4-dienoyl-CoA reductase [(2E)-enoyl-CoA-producing] (fadH), found in Bacillus subtilis (strain 168).